The sequence spans 231 residues: Flagellar L-ring protein 2 (231 aa).

An N-terminal signal peptide occupies residues 1–15 (MKNLILILPLLMLTG). Cys-16 is lipidated: N-palmitoyl cysteine. The S-diacylglycerol cysteine moiety is linked to residue Cys-16. The interval 30-54 (SPVGSGLRTQADPIPVTPRMRTPVS) is disordered.

The protein belongs to the FlgH family. In terms of assembly, the basal body constitutes a major portion of the flagellar organelle and consists of four rings (L,P,S, and M) mounted on a central rod.

The protein resides in the cell outer membrane. The protein localises to the bacterial flagellum basal body. Its function is as follows. Assembles around the rod to form the L-ring and probably protects the motor/basal body from shearing forces during rotation. The protein is Flagellar L-ring protein 2 of Bradyrhizobium diazoefficiens (strain JCM 10833 / BCRC 13528 / IAM 13628 / NBRC 14792 / USDA 110).